Here is a 370-residue protein sequence, read N- to C-terminus: Lipoyl synthase, mitochondrial (370 aa).

The [4Fe-4S] cluster site is built by cysteine 100, cysteine 105, cysteine 111, cysteine 131, cysteine 135, cysteine 138, and serine 346. The 220-residue stretch at 116–335 (DKSRATATIM…KEVAEKLGFL (220 aa)) folds into the Radical SAM core domain.

Belongs to the radical SAM superfamily. Lipoyl synthase family. The cofactor is [4Fe-4S] cluster.

Its subcellular location is the mitochondrion. It carries out the reaction [[Fe-S] cluster scaffold protein carrying a second [4Fe-4S](2+) cluster] + N(6)-octanoyl-L-lysyl-[protein] + 2 oxidized [2Fe-2S]-[ferredoxin] + 2 S-adenosyl-L-methionine + 4 H(+) = [[Fe-S] cluster scaffold protein] + N(6)-[(R)-dihydrolipoyl]-L-lysyl-[protein] + 4 Fe(3+) + 2 hydrogen sulfide + 2 5'-deoxyadenosine + 2 L-methionine + 2 reduced [2Fe-2S]-[ferredoxin]. The protein operates within protein modification; protein lipoylation via endogenous pathway; protein N(6)-(lipoyl)lysine from octanoyl-[acyl-carrier-protein]: step 2/2. Functionally, catalyzes the radical-mediated insertion of two sulfur atoms into the C-6 and C-8 positions of the octanoyl moiety bound to the lipoyl domains of lipoate-dependent enzymes, thereby converting the octanoylated domains into lipoylated derivatives. The sequence is that of Lipoyl synthase, mitochondrial (lip5) from Schizosaccharomyces pombe (strain 972 / ATCC 24843) (Fission yeast).